The primary structure comprises 302 residues: DDRGK domain-containing protein 1 (302 aa).

Over Met-1–Gly-5 the chain is Lumenal. A helical membrane pass occupies residues Gly-6–Trp-26. Residues Arg-27–Leu-302 are Cytoplasmic-facing. 2 disordered regions span residues Leu-36–Arg-151 and Asp-279–Leu-302. Positions Val-79–Gln-91 are enriched in acidic residues. The segment covering Lys-103 to Arg-151 has biased composition (basic and acidic residues).

It belongs to the DDRGK1 family.

The protein resides in the endoplasmic reticulum membrane. Functionally, substrate adapter for ufmylation, the covalent attachment of the ubiquitin-like modifier UFM1 to substrate proteins. The chain is DDRGK domain-containing protein 1 from Oryza sativa subsp. japonica (Rice).